A 142-amino-acid polypeptide reads, in one-letter code: DNA-directed RNA polymerases I, II, and III subunit rpabc3 (142 aa).

The non-specific ssDNA binding stretch occupies residues 16-40 (DPDGKKFDRVSRFVCYSENYEMDLQ).

The protein belongs to the eukaryotic RPB8 RNA polymerase subunit family. In terms of assembly, component of the RNA polymerase I (Pol I), RNA polymerase II (Pol II) and RNA polymerase III (Pol III) complexes consisting of at least 13, 12 and 17 subunits, respectively. Directly interacts with POLR2A.

The protein localises to the nucleus. It localises to the nucleolus. In terms of biological role, DNA-dependent RNA polymerase catalyzes the transcription of DNA into RNA using the four ribonucleoside triphosphates as substrates. Common component of RNA polymerases I, II and III which synthesize ribosomal RNA precursors, mRNA precursors and many functional non-coding RNAs, and small RNAs, such as 5S rRNA and tRNAs, respectively. This is DNA-directed RNA polymerases I, II, and III subunit rpabc3 (polr2h) from Dictyostelium discoideum (Social amoeba).